A 625-amino-acid chain; its full sequence is ATP-dependent RNA helicase mrh4, mitochondrial (625 aa).

The transit peptide at 1 to 16 (MWKTARDSVCLICRSA) directs the protein to the mitochondrion. The segment covering 19-28 (TTTSTSARAS) has biased composition (low complexity). The segment at 19-119 (TTTSTSARAS…DKNTKGQKAL (101 aa)) is disordered. The segment covering 90 to 113 (DPRKAPKPKPVEEDSRRDKRDKNT) has biased composition (basic and acidic residues). Positions 144 to 177 (QAFDQFDLLPVVKEAIAQEALKGMTEIKPTPVQR) match the Q motif motif. Positions 195-406 (PKSDNGREEF…EEQFPYINRI (212 aa)) constitute a Helicase ATP-binding domain. 208 to 215 (AETGSGKT) serves as a coordination point for ATP. The DEAD box signature appears at 353 to 356 (DEAD). Positions 453 to 625 (EGPKSEIDVK…ESMFMGQALV (173 aa)) constitute a Helicase C-terminal domain.

The protein belongs to the DEAD box helicase family. MRH4 subfamily.

The protein localises to the mitochondrion. The enzyme catalyses ATP + H2O = ADP + phosphate + H(+). Its function is as follows. ATP-binding RNA helicase involved in mitochondrial RNA metabolism. Required for maintenance of mitochondrial DNA. The sequence is that of ATP-dependent RNA helicase mrh4, mitochondrial (drh-15) from Neurospora crassa (strain ATCC 24698 / 74-OR23-1A / CBS 708.71 / DSM 1257 / FGSC 987).